A 93-amino-acid chain; its full sequence is HssA/B-like protein 23 (93 aa).

Belongs to the hssA/B family.

The chain is HssA/B-like protein 23 (hssl23) from Dictyostelium discoideum (Social amoeba).